The sequence spans 1755 residues: Transposon Ty1-ML2 Gag-Pol polyprotein (1755 aa).

A compositionally biased stretch (low complexity) spans 1 to 16 (MESQQLSQHSHISHGS). Disordered regions lie at residues 1-93 (MESQ…MMTQ), 126-173 (PQSQ…RPPP), and 352-421 (GSRN…SKST). 2 stretches are compositionally biased toward polar residues: residues 48–60 (TKAN…TPAS) and 127–152 (QSQF…GNTF). Residues 153-165 (TDSSSADSDMTST) are compositionally biased toward low complexity. The segment at 299–401 (NNGIHINNKV…NSKSKTARAH (103 aa)) is RNA-binding. Positions 402–418 (NVSTSNNSPSTDNDSIS) are enriched in low complexity. Serine 416 carries the phosphoserine modification. The active-site For protease activity; shared with dimeric partner is the aspartate 461. Residues 583–640 (NVHTSESTRKYPYPFIHRMLAHANAQTIRYSLKNNTITYFNESDVDRSSAIDYQCPDC) are integrase-type zinc finger-like. The Integrase catalytic domain occupies 660–835 (NSYEPFQYLH…AGLDISTLLP (176 aa)). Aspartate 671 and aspartate 736 together coordinate Mg(2+). Disordered regions lie at residues 956–1087 (SKAV…ETEK), 1092–1111 (RSPS…NIVP), and 1130–1171 (DLPL…DSNA). The span at 960–969 (SPTDSTPPST) shows a compositional bias: low complexity. Polar residues predominate over residues 1005 to 1015 (STPQISNIEST). Residues 1038 to 1053 (ESSHASKSKDFRHSDS) are compositionally biased toward basic and acidic residues. Polar residues-rich tracts occupy residues 1054–1082 (YSEN…QISD) and 1101–1111 (PENNSSHNIVP). Positions 1178 to 1212 (KKRSLEDNETEIKVSRDTWNTKNMRSLEPPRSKKR) match the Bipartite nuclear localization signal motif. One can recognise a Reverse transcriptase Ty1/copia-type domain in the interval 1338–1476 (NNYYITQLDI…DILGLEIKYQ (139 aa)). Mg(2+) contacts are provided by aspartate 1346, aspartate 1427, aspartate 1428, aspartate 1610, glutamate 1652, and aspartate 1685. One can recognise an RNase H Ty1/copia-type domain in the interval 1610 to 1752 (DASYGNQPYY…IKTFKLLTNK (143 aa)).

In terms of assembly, the capsid protein forms a homotrimer, from which the VLPs are assembled. The protease is a homodimer, whose active site consists of two apposed aspartic acid residues. Post-translationally, initially, virus-like particles (VLPs) are composed of the structural unprocessed proteins Gag and Gag-Pol, and also contain the host initiator methionine tRNA (tRNA(i)-Met) which serves as a primer for minus-strand DNA synthesis, and a dimer of genomic Ty RNA. Processing of the polyproteins occurs within the particle and proceeds by an ordered pathway, called maturation. First, the protease (PR) is released by autocatalytic cleavage of the Gag-Pol polyprotein yielding capsid protein p45 and a Pol-p154 precursor protein. This cleavage is a prerequisite for subsequent processing of Pol-p154 at the remaining sites to release the mature structural and catalytic proteins. Maturation takes place prior to the RT reaction and is required to produce transposition-competent VLPs.

It localises to the cytoplasm. It is found in the nucleus. It carries out the reaction DNA(n) + a 2'-deoxyribonucleoside 5'-triphosphate = DNA(n+1) + diphosphate. It catalyses the reaction Endonucleolytic cleavage to 5'-phosphomonoester.. In terms of biological role, capsid protein (CA) is the structural component of the virus-like particle (VLP), forming the shell that encapsulates the retrotransposons dimeric RNA genome. The particles are assembled from trimer-clustered units and there are holes in the capsid shells that allow for the diffusion of macromolecules. CA also has nucleocapsid-like chaperone activity, promoting primer tRNA(i)-Met annealing to the multipartite primer-binding site (PBS), dimerization of Ty1 RNA and initiation of reverse transcription. The aspartyl protease (PR) mediates the proteolytic cleavages of the Gag and Gag-Pol polyproteins after assembly of the VLP. Its function is as follows. Reverse transcriptase/ribonuclease H (RT) is a multifunctional enzyme that catalyzes the conversion of the retro-elements RNA genome into dsDNA within the VLP. The enzyme displays a DNA polymerase activity that can copy either DNA or RNA templates, and a ribonuclease H (RNase H) activity that cleaves the RNA strand of RNA-DNA heteroduplexes during plus-strand synthesis and hydrolyzes RNA primers. The conversion leads to a linear dsDNA copy of the retrotransposon that includes long terminal repeats (LTRs) at both ends. Functionally, integrase (IN) targets the VLP to the nucleus, where a subparticle preintegration complex (PIC) containing at least integrase and the newly synthesized dsDNA copy of the retrotransposon must transit the nuclear membrane. Once in the nucleus, integrase performs the integration of the dsDNA into the host genome. This is Transposon Ty1-ML2 Gag-Pol polyprotein (TY1B-ML2) from Saccharomyces cerevisiae (strain ATCC 204508 / S288c) (Baker's yeast).